Consider the following 46-residue polypeptide: Ligatoxin-B (46 aa).

Disulfide bonds link Cys-3-Cys-40, Cys-4-Cys-32, and Cys-16-Cys-26.

Belongs to the plant thionin (TC 1.C.44) family.

It localises to the secreted. Its function is as follows. Thionins are small plant proteins which are toxic to animal cells. They seem to exert their toxic effect at the level of the cell membrane. Their precise function is not known. The chain is Ligatoxin-B from Phoradendron liga (Argentine mistletoe).